The following is a 378-amino-acid chain: REST corepressor 3 (378 aa).

The ELM2 domain occupies 1-83 (MRVGAEYQAR…KSLADLPNFT (83 aa)). Positions 84-135 (PFPDEWTVEDKVLFEQAFSFHGKSFHRIQQMLPDKTIASLVKYYYSWKKTRS) constitute an SANT domain. Residues 147 to 219 (LANRNNQGDS…SQRSKCRPPK (73 aa)) form a disordered region. Basic and acidic residues predominate over residues 162 to 184 (EPHPMDGNDSDYDPKKEAKKEGN). The span at 205-217 (QHRHHSQRSKCRP) shows a compositional bias: basic residues. The stretch at 238–273 (ANTILRRLDMELISLKRQVQNAKQVNSALKQKMEGG) forms a coiled coil. The segment at 337-356 (TASSTSCCSCSPPSASAAPT) is disordered.

It belongs to the CoREST family.

Its subcellular location is the nucleus. Functionally, may act as a component of a corepressor complex that represses transcription. The chain is REST corepressor 3 (RCOR3) from Gallus gallus (Chicken).